A 395-amino-acid polypeptide reads, in one-letter code: S-adenosylmethionine synthase (395 aa).

Histidine 16 contributes to the ATP binding site. Aspartate 18 provides a ligand contact to Mg(2+). K(+) is bound at residue glutamate 44. Residues glutamate 57 and glutamine 100 each contribute to the L-methionine site. The segment at 100–110 is flexible loop; it reads QSPDIAQGVDR. Residues 167-169, 233-234, aspartate 242, 248-249, alanine 265, and lysine 269 each bind ATP; these read DAK, RF, and RK. An L-methionine-binding site is contributed by aspartate 242. An L-methionine-binding site is contributed by lysine 273.

It belongs to the AdoMet synthase family. Homotetramer; dimer of dimers. The cofactor is Mg(2+). Requires K(+) as cofactor.

The protein localises to the cytoplasm. It catalyses the reaction L-methionine + ATP + H2O = S-adenosyl-L-methionine + phosphate + diphosphate. It functions in the pathway amino-acid biosynthesis; S-adenosyl-L-methionine biosynthesis; S-adenosyl-L-methionine from L-methionine: step 1/1. Catalyzes the formation of S-adenosylmethionine (AdoMet) from methionine and ATP. The overall synthetic reaction is composed of two sequential steps, AdoMet formation and the subsequent tripolyphosphate hydrolysis which occurs prior to release of AdoMet from the enzyme. This chain is S-adenosylmethionine synthase, found in Burkholderia lata (strain ATCC 17760 / DSM 23089 / LMG 22485 / NCIMB 9086 / R18194 / 383).